The chain runs to 255 residues: tRNA (guanine-N(1)-)-methyltransferase (255 aa).

Residues Gly119 and 139–144 (IGDFIL) each bind S-adenosyl-L-methionine.

It belongs to the RNA methyltransferase TrmD family. Homodimer.

It localises to the cytoplasm. The enzyme catalyses guanosine(37) in tRNA + S-adenosyl-L-methionine = N(1)-methylguanosine(37) in tRNA + S-adenosyl-L-homocysteine + H(+). In terms of biological role, specifically methylates guanosine-37 in various tRNAs. The polypeptide is tRNA (guanine-N(1)-)-methyltransferase (Pseudoalteromonas translucida (strain TAC 125)).